The following is a 357-amino-acid chain: DNA primase small subunit PriS (357 aa).

Catalysis depends on residues Asp-105, Asp-107, and Asp-259.

The protein belongs to the eukaryotic-type primase small subunit family. In terms of assembly, heterodimer of a small subunit (PriS) and a large subunit (PriL). It depends on Mg(2+) as a cofactor. Mn(2+) is required as a cofactor.

In terms of biological role, catalytic subunit of DNA primase, an RNA polymerase that catalyzes the synthesis of short RNA molecules used as primers for DNA polymerase during DNA replication. The small subunit contains the primase catalytic core and has DNA synthesis activity on its own. Binding to the large subunit stabilizes and modulates the activity, increasing the rate of DNA synthesis while decreasing the length of the DNA fragments, and conferring RNA synthesis capability. The DNA polymerase activity may enable DNA primase to also catalyze primer extension after primer synthesis. May also play a role in DNA repair. This Methanococcus maripaludis (strain C5 / ATCC BAA-1333) protein is DNA primase small subunit PriS.